The following is a 381-amino-acid chain: MYG1 exonuclease (381 aa).

The N-terminal 47 residues, 1-47 (MGRGFLRGVLTLLPLRSVLQVQHCMLVSEPDLPPKRPRNNLMAPPRI), are a transit peptide targeting the mitochondrion. N6-acetyllysine occurs at positions 267 and 273.

It belongs to the MYG1 family.

The protein localises to the nucleus. It is found in the nucleoplasm. The protein resides in the mitochondrion matrix. Its subcellular location is the nucleolus. 3'-5' RNA exonuclease which cleaves in situ on specific transcripts in both nucleus and mitochondrion. Involved in regulating spatially segregated organellar RNA processing, acts as a coordinator of nucleo-mitochondrial crosstalk. In nucleolus, processes pre-ribosomal RNA involved in ribosome assembly and alters cytoplasmic translation. In mitochondrial matrix, processes 3'-termini of the mito-ribosomal and messenger RNAs and controls translation of mitochondrial proteins. The protein is MYG1 exonuclease of Rattus norvegicus (Rat).